A 370-amino-acid polypeptide reads, in one-letter code: Protein Mut11 (370 aa).

The tract at residues 1 to 22 (MARGPGDTDMDEASADAAIPSS) is disordered. 7 WD repeats span residues 38–77 (GHTK…RVNT), 80–119 (GHSC…CLRT), 122–162 (GHTN…CLRE), 165–204 (AHSD…CLKT), 208–247 (RDSP…TRRT), 262–301 (GFLG…VVGR), and 329–370 (GHTA…PAAA).

The protein belongs to the WD repeat WDR5/wds family.

The protein localises to the nucleus. In terms of biological role, part of a complex involved in 'Lys-4' histone H3 methylation. The polypeptide is Protein Mut11 (Mut11) (Chlamydomonas reinhardtii (Chlamydomonas smithii)).